A 474-amino-acid polypeptide reads, in one-letter code: Glutamate--tRNA ligase 2 (474 aa).

A 'HIGH' region motif is present at residues 16 to 26; the sequence is PSPTGFLHIGG. The short motif at 245–249 is the 'KMSKS' region element; the sequence is KLSKR. ATP is bound at residue K248.

Belongs to the class-I aminoacyl-tRNA synthetase family. Glutamate--tRNA ligase type 1 subfamily. In terms of assembly, monomer.

It is found in the cytoplasm. The enzyme catalyses tRNA(Glu) + L-glutamate + ATP = L-glutamyl-tRNA(Glu) + AMP + diphosphate. In terms of biological role, catalyzes the attachment of glutamate to tRNA(Glu) in a two-step reaction: glutamate is first activated by ATP to form Glu-AMP and then transferred to the acceptor end of tRNA(Glu). This chain is Glutamate--tRNA ligase 2, found in Rhizorhabdus wittichii (strain DSM 6014 / CCUG 31198 / JCM 15750 / NBRC 105917 / EY 4224 / RW1) (Sphingomonas wittichii).